Consider the following 680-residue polypeptide: DNA ligase (680 aa).

32–36 serves as a coordination point for NAD(+); sequence DTVYD. The disordered stretch occupies residues 47-66; that stretch reads QNDPGLQRPDSPTQRVGGAP. NAD(+) contacts are provided by residues 81–82 and glutamate 115; that span reads SL. Lysine 117 serves as the catalytic N6-AMP-lysine intermediate. Arginine 138, glutamate 175, lysine 291, and lysine 315 together coordinate NAD(+). 4 residues coordinate Zn(2+): cysteine 409, cysteine 412, cysteine 427, and cysteine 432. One can recognise a BRCT domain in the interval 602-680; that stretch reads DADGVLQGKT…EADLTALLQP (79 aa).

The protein belongs to the NAD-dependent DNA ligase family. LigA subfamily. Mg(2+) serves as cofactor. Requires Mn(2+) as cofactor.

It catalyses the reaction NAD(+) + (deoxyribonucleotide)n-3'-hydroxyl + 5'-phospho-(deoxyribonucleotide)m = (deoxyribonucleotide)n+m + AMP + beta-nicotinamide D-nucleotide.. DNA ligase that catalyzes the formation of phosphodiester linkages between 5'-phosphoryl and 3'-hydroxyl groups in double-stranded DNA using NAD as a coenzyme and as the energy source for the reaction. It is essential for DNA replication and repair of damaged DNA. This chain is DNA ligase, found in Synechococcus sp. (strain CC9605).